The primary structure comprises 294 residues: MASLRQIAFYGKGGIGKSTTSQNTLAALAEMGQKILIVGCDPKADSTRLILHAKAQDTILSLAASAGSVEDLELEDVMKVGYQDIRCVESGGPEPGVGCAGRGVITSINFLEENGAYENIDYVSYDVLGDVVCGGFAMPIRENKAQEIYIVMSGEMMAMYAANNISKGILKYANSGGVRLGGLICNERQTDKELELAEALAKKLGTQLIYFVPRDNVVQHAELRRMTVLEYAPDSKQADHYRKLAAKVHNNGGKGIIPTPISMDELEDMLMEHGIIKAVDESIIGKTAAELAAS.

11-18 (GKGGIGKS) is a binding site for ATP. C99 is a binding site for [4Fe-4S] cluster. At R102 the chain carries ADP-ribosylarginine; by dinitrogenase reductase ADP-ribosyltransferase. Position 133 (C133) interacts with [4Fe-4S] cluster.

This sequence belongs to the NifH/BchL/ChlL family. In terms of assembly, homodimer. Requires [4Fe-4S] cluster as cofactor. The reversible ADP-ribosylation of Arg-102 inactivates the nitrogenase reductase and regulates nitrogenase activity.

The catalysed reaction is N2 + 8 reduced [2Fe-2S]-[ferredoxin] + 16 ATP + 16 H2O = H2 + 8 oxidized [2Fe-2S]-[ferredoxin] + 2 NH4(+) + 16 ADP + 16 phosphate + 6 H(+). Its function is as follows. The key enzymatic reactions in nitrogen fixation are catalyzed by the nitrogenase complex, which has 2 components: the iron protein and the molybdenum-iron protein. The sequence is that of Nitrogenase iron protein (nifH) from Bradyrhizobium diazoefficiens (strain JCM 10833 / BCRC 13528 / IAM 13628 / NBRC 14792 / USDA 110).